A 271-amino-acid polypeptide reads, in one-letter code: Cyclic AMP-dependent transcription factor ATF-1 (271 aa).

Residues 1–61 (MEDSHKSTTS…QKAHGILARR (61 aa)) form a disordered region. In terms of domain architecture, KID spans 31–90 (QVSSLSESEESQDSSDSIGSSQKAHGILARRPSYRKILKDLSSEDTRGRKGDGENSGVSA). Ser63 is subject to Phosphoserine; by CaMK1, CDK3, RPS6KA4 and RPS6KA5. Position 198 is a phosphoserine; by HIPK2 (Ser198). Residues Lys208 and Lys215 each participate in a glycyl lysine isopeptide (Lys-Gly) (interchain with G-Cter in SUMO2) cross-link. Residues 213 to 271 (QLKREIRLMKNREAARECRRKKKEYVKCLENRVAVLENQNKTLIEELKTLKDLYSNKSV) form the bZIP domain. Positions 215–239 (KREIRLMKNREAARECRRKKKEYVK) are basic motif. The tract at residues 241 to 262 (LENRVAVLENQNKTLIEELKTL) is leucine-zipper.

It belongs to the bZIP family. ATF subfamily. Binds DNA as a dimer. Interacts with HIPK2 and CDK3. Interacts with MOTS-c, a peptide produced by the mitochondrially encoded 12S rRNA MT-RNR1; the interaction occurs in the nucleus following metabolic stress. Phosphorylated at Ser-198 by HIPK2 in response to genotoxic stress. This phosphorylation promotes transcription repression of FTH1 and other antioxidant detoxification genes. The CDK3-mediated phosphorylation at Ser-63 promotes its transactivation and transcriptional activities. Phosphorylated at Ser-63 by RPS6KA4 and RPS6KA5 in response to mitogenic or stress stimuli.

The protein resides in the nucleus. Functionally, this protein binds the cAMP response element (CRE) (consensus: 5'-GTGACGT[AC][AG]-3'), a sequence present in many viral and cellular promoters. Binds to the Tax-responsive element (TRE) of HTLV-I. Mediates PKA-induced stimulation of CRE-reporter genes. Represses the expression of FTH1 and other antioxidant detoxification genes. Triggers cell proliferation and transformation. The polypeptide is Cyclic AMP-dependent transcription factor ATF-1 (ATF1) (Homo sapiens (Human)).